We begin with the raw amino-acid sequence, 581 residues long: Arginine--tRNA ligase (581 aa).

Positions 122-132 match the 'HIGH' region motif; that stretch reads PNVAKPMHVGH.

It belongs to the class-I aminoacyl-tRNA synthetase family. As to quaternary structure, monomer.

Its subcellular location is the cytoplasm. The enzyme catalyses tRNA(Arg) + L-arginine + ATP = L-arginyl-tRNA(Arg) + AMP + diphosphate. This is Arginine--tRNA ligase from Francisella tularensis subsp. tularensis (strain FSC 198).